Reading from the N-terminus, the 302-residue chain is Aspartate carbamoyltransferase catalytic subunit (302 aa).

Carbamoyl phosphate contacts are provided by arginine 53 and threonine 54. An L-aspartate-binding site is contributed by lysine 82. Positions 103, 131, and 134 each coordinate carbamoyl phosphate. Residues arginine 164 and arginine 223 each contribute to the L-aspartate site. Carbamoyl phosphate is bound by residues leucine 260 and proline 261.

Belongs to the aspartate/ornithine carbamoyltransferase superfamily. ATCase family. Heterooligomer of catalytic and regulatory chains.

The catalysed reaction is carbamoyl phosphate + L-aspartate = N-carbamoyl-L-aspartate + phosphate + H(+). It participates in pyrimidine metabolism; UMP biosynthesis via de novo pathway; (S)-dihydroorotate from bicarbonate: step 2/3. In terms of biological role, catalyzes the condensation of carbamoyl phosphate and aspartate to form carbamoyl aspartate and inorganic phosphate, the committed step in the de novo pyrimidine nucleotide biosynthesis pathway. The sequence is that of Aspartate carbamoyltransferase catalytic subunit from Methanococcus maripaludis (strain C6 / ATCC BAA-1332).